The chain runs to 281 residues: Pre T-cell antigen receptor alpha (281 aa).

The N-terminal stretch at 1-23 (MAGTWLLLLLALGCPALPTGVGG) is a signal peptide. Residues 24–146 (TPFPSLAPPI…QEPLRGTPGG (123 aa)) are Extracellular-facing. A disulfide bridge links Cys47 with Cys107. Asn67 is a glycosylation site (N-linked (GlcNAc...) asparagine). A helical transmembrane segment spans residues 147 to 167 (ALWLGVLRLLLFKLLLFDLLL). Topologically, residues 168-281 (TCSCLCDPAG…LPPPLQAGAA (114 aa)) are cytoplasmic. Residues 196–233 (LHPATETGGREATSSPRPQPRDRRWGDTPPGRKPGSPV) form a disordered region.

In terms of assembly, heterodimer with TCRB; disulfide linked. This heterodimer assembles with CD3 proteins into a signaling-competent pre-T-cell receptor complex. Interacts with RHBDD1. Expressed in immature but not mature T-cells. Also found in CD34+ cells from peripheral blood, CD34+ precursors from umbilical cord blood and adult bone marrow.

The protein resides in the membrane. It is found in the cell membrane. Functionally, component of the pre-T-cell receptor complex (composed of PTCRA, TCRB and the CD3 complex) that has a crucial role in early T-cell development, particularly alpha-beta T cell differentiation. This is Pre T-cell antigen receptor alpha from Homo sapiens (Human).